Reading from the N-terminus, the 422-residue chain is Mitogen-activated protein kinase spm1 (422 aa).

Residues 21 to 314 (FKVVKELGQG…VDDALEHPYL (294 aa)) form the Protein kinase domain. ATP-binding positions include 27-35 (LGQGAYGIV) and K52. Catalysis depends on D149, which acts as the Proton acceptor. Position 186 is a phosphothreonine (T186). The TXY signature appears at 186–188 (TEY). Phosphotyrosine is present on Y188. The tract at residues 359–422 (RRRSHPTNPT…DHKSDDNRHN (64 aa)) is disordered. Residues 364–379 (PTNPTVNIPQPAQTVP) show a composition bias toward polar residues. Residues 380 to 397 (SNDNGSFNVSSSSSSQTS) show a composition bias toward low complexity. Basic and acidic residues predominate over residues 411–422 (AIDHKSDDNRHN).

Belongs to the protein kinase superfamily. CMGC Ser/Thr protein kinase family. MAP kinase subfamily. Requires Mg(2+) as cofactor. Post-translationally, dually phosphorylated on Thr-186 and Tyr-188, which activates the enzyme.

The enzyme catalyses L-seryl-[protein] + ATP = O-phospho-L-seryl-[protein] + ADP + H(+). It catalyses the reaction L-threonyl-[protein] + ATP = O-phospho-L-threonyl-[protein] + ADP + H(+). With respect to regulation, activated by tyrosine and threonine phosphorylation by skh1/pek1. Functionally, regulates cell integrity and functions coordinately with the protein kinase C pathway (pck1 and pck2). Involved the regulation of wall architecture, cell shape, cytokinesis in exponential and stationary phase, and metabolism of ions. The sequence is that of Mitogen-activated protein kinase spm1 (spm1) from Schizosaccharomyces pombe (strain 972 / ATCC 24843) (Fission yeast).